The primary structure comprises 122 residues: Flagellar protein FliT (122 aa).

The required for homodimerization stretch occupies residues 1-50 (MTSTVEFINRWQRIALLSQSLLELAQRGEWDLLLQQEVSYLQSIETVMEK). Positions 60–98 (IQDMVAGYIKQTLDNEQLLKGLLQQRLDELSSLIGQSTR) are fliD binding.

Belongs to the FliT family. In terms of assembly, homodimer. Interacts with FliD and FlhC.

The protein localises to the cytoplasm. The protein resides in the cytosol. Functionally, dual-function protein that regulates the transcription of class 2 flagellar operons and that also acts as an export chaperone for the filament-capping protein FliD. As a transcriptional regulator, acts as an anti-FlhDC factor; it directly binds FlhC, thus inhibiting the binding of the FlhC/FlhD complex to class 2 promoters, resulting in decreased expression of class 2 flagellar operons. As a chaperone, effects FliD transition to the membrane by preventing its premature polymerization, and by directing it to the export apparatus. The sequence is that of Flagellar protein FliT from Salmonella schwarzengrund (strain CVM19633).